The sequence spans 476 residues: Serine/threonine-protein kinase sax-1 (476 aa).

Positions 87-381 (FESLKVIGRG…LDEIKQCPFV (295 aa)) constitute a Protein kinase domain. ATP contacts are provided by residues 93–101 (IGRGAFGEV) and K116. D210 (proton acceptor) is an active-site residue. Residues 382–452 (KRIDWNHIRE…KRFDGLTQKM (71 aa)) enclose the AGC-kinase C-terminal domain.

It belongs to the protein kinase superfamily. AGC Ser/Thr protein kinase family. It depends on Mg(2+) as a cofactor. Widely expressed in embryonic and larval neurons that contribute axons to the nerve ring and in hypodermal cells, including lateral seam cells. Also displays a punctate localization in muscle.

It is found in the cytoplasm. The protein resides in the nucleus. The catalysed reaction is L-seryl-[protein] + ATP = O-phospho-L-seryl-[protein] + ADP + H(+). The enzyme catalyses L-threonyl-[protein] + ATP = O-phospho-L-threonyl-[protein] + ADP + H(+). Acts with sax-2 to restrict the growth of both primary and secondary neurites. Regulates mechanosensory tiling by controlling the termination point of sensory dendrites. In Caenorhabditis elegans, this protein is Serine/threonine-protein kinase sax-1.